The primary structure comprises 487 residues: Bifunctional protein HldE (487 aa).

The segment at 1-329 (MLHAVETAFY…GALLTDATYE (329 aa)) is ribokinase. 204 to 207 (NRGE) is a binding site for ATP. D274 is an active-site residue. The segment at 356-487 (FTNGCFDLLH…GIVQRISAQK (132 aa)) is cytidylyltransferase.

In the N-terminal section; belongs to the carbohydrate kinase PfkB family. The protein in the C-terminal section; belongs to the cytidylyltransferase family. As to quaternary structure, homodimer.

The enzyme catalyses D-glycero-beta-D-manno-heptose 7-phosphate + ATP = D-glycero-beta-D-manno-heptose 1,7-bisphosphate + ADP + H(+). It carries out the reaction D-glycero-beta-D-manno-heptose 1-phosphate + ATP + H(+) = ADP-D-glycero-beta-D-manno-heptose + diphosphate. The protein operates within nucleotide-sugar biosynthesis; ADP-L-glycero-beta-D-manno-heptose biosynthesis; ADP-L-glycero-beta-D-manno-heptose from D-glycero-beta-D-manno-heptose 7-phosphate: step 1/4. It participates in nucleotide-sugar biosynthesis; ADP-L-glycero-beta-D-manno-heptose biosynthesis; ADP-L-glycero-beta-D-manno-heptose from D-glycero-beta-D-manno-heptose 7-phosphate: step 3/4. Its function is as follows. Catalyzes the phosphorylation of D-glycero-D-manno-heptose 7-phosphate at the C-1 position to selectively form D-glycero-beta-D-manno-heptose-1,7-bisphosphate. Catalyzes the ADP transfer from ATP to D-glycero-beta-D-manno-heptose 1-phosphate, yielding ADP-D-glycero-beta-D-manno-heptose. In Magnetococcus marinus (strain ATCC BAA-1437 / JCM 17883 / MC-1), this protein is Bifunctional protein HldE.